A 309-amino-acid chain; its full sequence is Olfactory receptor 1A1 (309 aa).

Residues 1 to 25 (MRENNQSSTLEFILLGVTGQQEQED) lie on the Extracellular side of the membrane. The N-linked (GlcNAc...) asparagine glycan is linked to Asn5. A helical membrane pass occupies residues 26 to 49 (FFYILFLFIYPITLIGNLLIVLAI). Topologically, residues 50 to 57 (CSDVHLHN) are cytoplasmic. The helical transmembrane segment at 58 to 79 (PMYFLLANLSLVDIFFSSVTIP) threads the bilayer. Topologically, residues 80–100 (KMLANHLLGSKSISFGGCLTQ) are extracellular. Cys97 and Cys189 form a disulfide bridge. Residues 101-120 (MYFMIALGNTDSYILAAMAY) form a helical membrane-spanning segment. Topologically, residues 121–139 (DRAVAISRPLHYTTIMSPR) are cytoplasmic. A helical membrane pass occupies residues 140–158 (SCIWLIAGSWVIGNANALP). Residues 159–195 (HTLLTASLSFCGNQEVANFYCDITPLLKLSCSDIHFH) lie on the Extracellular side of the membrane. A helical membrane pass occupies residues 196–218 (VKMMYLGVGIFSVPLLCIIVSYI). Residues 219 to 235 (RVFSTVFQVPSTKGVLK) are Cytoplasmic-facing. Residues 236 to 258 (AFSTCGSHLTVVSLYYGTVMGMY) form a helical membrane-spanning segment. Residues 259-270 (FRPLTNYSLKDA) are Extracellular-facing. N-linked (GlcNAc...) asparagine glycosylation occurs at Asn264. Residues 271–290 (VITVMYTAVTPMLNPFIYSL) form a helical membrane-spanning segment. The Cytoplasmic segment spans residues 291–309 (RNRDVKAALRKLFNKRISS).

It belongs to the G-protein coupled receptor 1 family.

It is found in the cell membrane. In terms of biological role, odorant receptor. This is Olfactory receptor 1A1 (OR1A1) from Pan troglodytes (Chimpanzee).